The sequence spans 348 residues: Phenylalanine--tRNA ligase alpha subunit (348 aa).

E259 contributes to the Mg(2+) binding site.

The protein belongs to the class-II aminoacyl-tRNA synthetase family. Phe-tRNA synthetase alpha subunit type 1 subfamily. In terms of assembly, tetramer of two alpha and two beta subunits. Requires Mg(2+) as cofactor.

The protein resides in the cytoplasm. It carries out the reaction tRNA(Phe) + L-phenylalanine + ATP = L-phenylalanyl-tRNA(Phe) + AMP + diphosphate + H(+). This is Phenylalanine--tRNA ligase alpha subunit from Lactiplantibacillus plantarum (strain ATCC BAA-793 / NCIMB 8826 / WCFS1) (Lactobacillus plantarum).